Reading from the N-terminus, the 407-residue chain is Tryptophan 2,3-dioxygenase B (407 aa).

Residues 71–75 (FIVTH) and arginine 143 each bind substrate. Histidine 327 is a heme binding site. Threonine 341 lines the substrate pocket.

The protein belongs to the tryptophan 2,3-dioxygenase family. Homotetramer. Dimer of dimers. The cofactor is heme.

The enzyme catalyses L-tryptophan + O2 = N-formyl-L-kynurenine. It functions in the pathway amino-acid degradation; L-tryptophan degradation via kynurenine pathway; L-kynurenine from L-tryptophan: step 1/2. Its function is as follows. Heme-dependent dioxygenase that catalyzes the oxidative cleavage of the L-tryptophan (L-Trp) pyrrole ring and converts L-tryptophan to N-formyl-L-kynurenine. Catalyzes the oxidative cleavage of the indole moiety. The chain is Tryptophan 2,3-dioxygenase B from Danio rerio (Zebrafish).